Reading from the N-terminus, the 57-residue chain is UPF0391 membrane protein XC_2938 (57 aa).

2 consecutive transmembrane segments (helical) span residues 4 to 24 and 33 to 53; these read WAII…GGMA and FLFW…MTIA.

This sequence belongs to the UPF0391 family.

Its subcellular location is the cell membrane. This chain is UPF0391 membrane protein XC_2938, found in Xanthomonas campestris pv. campestris (strain 8004).